A 65-amino-acid chain; its full sequence is Large ribosomal subunit protein bL28 (65 aa).

The disordered stretch occupies residues 1–26 (MARRDDLTNKGPMSGNKRSHALNATK). The segment covering 17–26 (KRSHALNATK) has biased composition (basic residues).

The protein belongs to the bacterial ribosomal protein bL28 family.

In Mycoplasma mobile (strain ATCC 43663 / 163K / NCTC 11711) (Mesomycoplasma mobile), this protein is Large ribosomal subunit protein bL28.